A 143-amino-acid polypeptide reads, in one-letter code: Glycine cleavage system H protein 1 (143 aa).

In terms of domain architecture, Lipoyl-binding spans 26–107 (IYSVGMASIL…PYSSWIAKLK (82 aa)). Residue Lys-67 is modified to N6-lipoyllysine.

The protein belongs to the GcvH family. The glycine cleavage system is composed of four proteins: P, T, L and H. (R)-lipoate is required as a cofactor.

In terms of biological role, the glycine cleavage system catalyzes the degradation of glycine. The H protein shuttles the methylamine group of glycine from the P protein to the T protein. This is Glycine cleavage system H protein 1 from Aquifex aeolicus (strain VF5).